The chain runs to 314 residues: Olfactory receptor 52B4 (314 aa).

Topologically, residues 1 to 27 are extracellular; the sequence is MPTVNHSGTSHTVFHLLGIPGLQDQHM. Residue Asn5 is glycosylated (N-linked (GlcNAc...) asparagine). A helical membrane pass occupies residues 28 to 48; sequence WISIPFFISYVTALLGNSLLI. The Cytoplasmic segment spans residues 49–56; sequence FIILTKRS. A helical transmembrane segment spans residues 57–77; sequence LHEPMYLFLCMLAGADIVLST. The Extracellular segment spans residues 78–101; it reads CTIPQALAIFWFRAGDISLDRCIT. Cys99 and Cys191 are oxidised to a cystine. A helical membrane pass occupies residues 102 to 122; sequence QLFFIHSTFISESGILLVMAF. At 123 to 141 the chain is on the cytoplasmic side; sequence DHYIAICYPLRYTTILTNA. A helical transmembrane segment spans residues 142–162; it reads LIKKICVTVSLRSYGTIFPII. Over 163–198 the chain is Extracellular; it reads FLLKRLTFCQNNIIPHTFCEHIGLAKYACNDIRINI. Residues 199–219 form a helical membrane-spanning segment; that stretch reads WYGFSILMSTVVLDVVLIFIS. The Cytoplasmic portion of the chain corresponds to 220 to 239; it reads YMLILHAVFHMPSPDACHKA. A helical transmembrane segment spans residues 240-260; that stretch reads LNTFGSHVCIIILFYGSGIFT. At 261-275 the chain is on the extracellular side; the sequence is ILTQRFGRHIPPCIH. A helical transmembrane segment spans residues 276 to 296; sequence IPLANVCILAPPMLNPIIYGI. Residues 297 to 314 lie on the Cytoplasmic side of the membrane; the sequence is KTKQIQEQVVQFLFIKQK.

Belongs to the G-protein coupled receptor 1 family.

The protein resides in the cell membrane. Its function is as follows. Odorant receptor. This is Olfactory receptor 52B4 (OR52B4) from Homo sapiens (Human).